The following is a 904-amino-acid chain: Protein translocase subunit SecA (904 aa).

Residues Gln-87, 105–109 (GEGKT), and Asp-507 each bind ATP. Residues 865-887 (GEGAEAAGQQPADAGPKIGRNDP) form a disordered region. The segment covering 868–880 (AEAAGQQPADAGP) has biased composition (low complexity). Residues Cys-888, Cys-890, Cys-899, and His-900 each coordinate Zn(2+).

This sequence belongs to the SecA family. In terms of assembly, monomer and homodimer. Part of the essential Sec protein translocation apparatus which comprises SecA, SecYEG and auxiliary proteins SecDF-YajC and YidC. Requires Zn(2+) as cofactor.

It localises to the cell inner membrane. The protein localises to the cytoplasm. The enzyme catalyses ATP + H2O + cellular proteinSide 1 = ADP + phosphate + cellular proteinSide 2.. Its function is as follows. Part of the Sec protein translocase complex. Interacts with the SecYEG preprotein conducting channel. Has a central role in coupling the hydrolysis of ATP to the transfer of proteins into and across the cell membrane, serving both as a receptor for the preprotein-SecB complex and as an ATP-driven molecular motor driving the stepwise translocation of polypeptide chains across the membrane. This chain is Protein translocase subunit SecA, found in Dechloromonas aromatica (strain RCB).